The primary structure comprises 122 residues: UPF0102 protein xcc-b100_3645 (122 aa).

Belongs to the UPF0102 family.

The protein is UPF0102 protein xcc-b100_3645 of Xanthomonas campestris pv. campestris (strain B100).